A 932-amino-acid chain; its full sequence is MKQLPAATVRLLSSSQIITSVVSVVKELIENSLDAGATSVDVKLENYGFDKIEVRDNGEGIKAVDAPVMAMKYYTSKINSHEDLENLTTYGFRGEALGSICCIAEVLITTRTAADNFSTQYVLDGSGHILSQKPSHLGQGTTVTALRLFKNLPVRKQFYSTAKKCKDEIKKIQDLLMSFGILKPDLRIVFVHNKAVIWQKSRVSDHKMALMSVLGTAVMNNMESFQYHSEESQIYLSGFLPKCDADHSFTSLSTPERSFIFINSRPVHQKDILKLIRHHYNLKCLKESTRLYPVFFLKIDVPTADVDVNLTPDKSQVLLQNKESVLIALENLMTTCYGPLPSTNSYENNKTDVSAADIVLSKTAETDVLFNKVESSGKNYSNVDTSVIPFQNDMHNDESGKNTDDCLNHQISIGDFGYGHCSSEISNIDKNTKNAFQDISMSNVSWENSQTEYSKTCFISSVKHTQSENGNKDHIDESGENEEEAGLENSSEISADEWSRGNILKNSVGENIEPVKILVPEKSLPCKVSNNNYPIPEQMNLNEDSCNKKSNVIDNKSGKVTAYDLLSNRVIKKPMSASALFVQDHRPQFLIENPKTSLEDATLQIEELWKTLSEEEKLKYEEKATKDLERYNSQMKRAIEQESQMSLKDGRKKIKPTSAWNLAQKHKLKTSLSNQPKLDELLQSQIEKRRSQNIKMVQIPFSMKNLKINFKKQNKVDLEEKDEPCLIHNLRFPDAWLMTSKTEVMLLNPYRVEEALLFKRLLENHKLPAEPLEKPIMLTESLFNGSHYLDVLYKMTADDQRYSGSTYLSDPRLTANGFKIKLIPGVSITENYLEIEGMANCLPFYGVADLKEILNAILNRNAKEVYECRPRKVISYLEGEAVRLSRQLPMYLSKEDIQDIIYRMKHQFGNEIKECVHGRPFFHHLTYLPETT.

The tract at residues 465 to 493 (TQSENGNKDHIDESGENEEEAGLENSSEI) is disordered. Residues 571 to 639 (IKKPMSASAL…RYNSQMKRAI (69 aa)) constitute a DNA-binding region (HMG box).

The protein belongs to the DNA mismatch repair MutL/HexB family. As to quaternary structure, component of the DNA mismatch repair (MMR) complex composed at least of MSH2, MSH3, MSH6, PMS1 and MLH1. The MutL-beta complex is a heterodimer of PMS1 and MLH1. Interacts with MCM9.

The protein resides in the nucleus. Functionally, probably involved in the repair of mismatches in DNA. The chain is PMS1 protein homolog 1 (PMS1) from Homo sapiens (Human).